A 734-amino-acid polypeptide reads, in one-letter code: Diacylglycerol kinase alpha (734 aa).

EF-hand domains are found at residues 109–144 and 154–189; these read RPEDKLEFTFKLYDTDRNGILDSSEVDRIIIQMMRM and ELRPILQEMMKEIDYDGSGSVSLAEWLRAGATTVPL. Residues aspartate 122, aspartate 124, asparagine 126, glutamate 133, aspartate 167, aspartate 169, serine 171, serine 173, and glutamate 178 each coordinate Ca(2+). 2 consecutive Phorbol-ester/DAG-type zinc fingers follow at residues 204 to 252 and 268 to 318; these read QHMW…ALPC and SHVW…GHEC. One can recognise a DAGKc domain in the interval 371-505; sequence SNTHPLLVFV…MDRWSVEVIP (135 aa). Lysine 483 is subject to N6-acetyllysine.

Belongs to the eukaryotic diacylglycerol kinase family. In terms of assembly, monomer.

The protein resides in the cytoplasm. The protein localises to the cytosol. The enzyme catalyses a 1,2-diacyl-sn-glycerol + ATP = a 1,2-diacyl-sn-glycero-3-phosphate + ADP + H(+). It carries out the reaction a 1-O-alkyl-sn-glycerol + ATP = a 1-O-alkyl-sn-glycero-3-phosphate + ADP + H(+). The catalysed reaction is 1-O-alkyl-2-acyl-sn-glycerol + ATP = 1-O-alkyl-2-acyl-sn-glycero-3-phosphate + ADP + H(+). It catalyses the reaction 1,2-dihexadecanoyl-sn-glycerol + ATP = 1,2-dihexadecanoyl-sn-glycero-3-phosphate + ADP + H(+). The enzyme catalyses 1-hexadecanoyl-2-(9Z-octadecenoyl)-sn-glycerol + ATP = 1-hexadecanoyl-2-(9Z-octadecenoyl)-sn-glycero-3-phosphate + ADP + H(+). It carries out the reaction 2-(9Z-octadecenoyl)-glycerol + ATP = 2-(9Z-octadecenoyl)-sn-glycero-3-phosphate + ADP + H(+). The catalysed reaction is 1,2-di-(9Z-octadecenoyl)-sn-glycerol + ATP = 1,2-di-(9Z-octadecenoyl)-sn-glycero-3-phosphate + ADP + H(+). It catalyses the reaction 1-octadecanoyl-2-(5Z,8Z,11Z,14Z-eicosatetraenoyl)-sn-glycerol + ATP = 1-octadecanoyl-2-(5Z,8Z,11Z,14Z-eicosatetraenoyl)-sn-glycero-3-phosphate + ADP + H(+). The enzyme catalyses 1,2-didecanoyl-sn-glycerol + ATP = 1,2-didecanoyl-sn-glycero-3-phosphate + ADP + H(+). It carries out the reaction 1-O-hexadecyl-2-acetyl-sn-glycerol + ATP = 1-O-hexadecyl-2-acetyl-sn-glycero-3-phosphate + ADP + H(+). The catalysed reaction is 1-O-hexadecyl-2-(5Z,8Z,11Z,14Z-eicosatetraenoyl)-sn-glycerol + ATP = 1-O-hexadecyl-2-(5Z,8Z,11Z,14Z-eicosatetraenoyl)-sn-glycero-3-phosphate + ADP + H(+). It catalyses the reaction 1-O-hexadecyl-2-(9Z-octadecenoyl)-sn-glycerol + ATP = 1-O-hexadecyl-2-(9Z-octadecenoyl)-sn-glycero-3-phosphate + ADP + H(+). The enzyme catalyses 1-O-hexadecyl-sn-glycerol + ATP = 1-O-hexadecyl-sn-glycero-3-phosphate + ADP + H(+). It participates in lipid metabolism; glycerolipid metabolism. Its activity is regulated as follows. Stimulated by calcium and phosphatidylserine. Functionally, diacylglycerol kinase that converts diacylglycerol/DAG into phosphatidic acid/phosphatidate/PA and regulates the respective levels of these two bioactive lipids. Thereby, acts as a central switch between the signaling pathways activated by these second messengers with different cellular targets and opposite effects in numerous biological processes. Also plays an important role in the biosynthesis of complex lipids. Can also phosphorylate 1-alkyl-2-acylglycerol in vitro as efficiently as diacylglycerol provided it contains an arachidonoyl group. Also involved in the production of alkyl-lysophosphatidic acid, another bioactive lipid, through the phosphorylation of 1-alkyl-2-acetyl glycerol. The sequence is that of Diacylglycerol kinase alpha (DGKA) from Bos taurus (Bovine).